The following is a 434-amino-acid chain: Protein HEAT INTOLERANT 4 (434 aa).

The short motif at 1–8 is the Nuclear localization signal 1 element; it reads MKKGAKRK. The span at 1–15 shows a compositional bias: basic residues; that stretch reads MKKGAKRKGVSKAGR. The tract at residues 1-131 is disordered; the sequence is MKKGAKRKGV…PVPKAKKPRA (131 aa). Basic and acidic residues predominate over residues 30–53; it reads ETTKTTQEESQQHEEEVVDEVKEN. Acidic residues predominate over residues 54–82; it reads GEEEEAKGDQEEEEDAKPDSLEEDEENQE. Residues 83–98 show a composition bias toward basic and acidic residues; that stretch reads DEVKAEEVKEEVEKKP. The Nuclear localization signal 2 signature appears at 95–102; the sequence is EKKPVARR. Positions 99–110 are enriched in basic residues; the sequence is VARRGGKRKRAT. Basic and acidic residues predominate over residues 111–122; that stretch reads KKDTEIKDEKKP. Residues 363–394 are a coiled coil; that stretch reads VKEQVRAAKKANREAKDARKKAIEEMSEDTKQ. The short motif at 370–377 is the Nuclear localization signal 3 element; that stretch reads AKKANREA.

It is found in the nucleus. The protein resides in the nucleolus. Essential protein required for basal thermotolerance, especially during heat-induced chromocentre decondensation, thus regulating transcriptional gene silencing (TGS). In Arabidopsis thaliana (Mouse-ear cress), this protein is Protein HEAT INTOLERANT 4.